Reading from the N-terminus, the 421-residue chain is Serine hydroxymethyltransferase (421 aa).

Residues Leu121 and 125-127 each bind (6S)-5,6,7,8-tetrahydrofolate; that span reads GHL. Residue Lys229 is modified to N6-(pyridoxal phosphate)lysine.

It belongs to the SHMT family. In terms of assembly, homodimer. It depends on pyridoxal 5'-phosphate as a cofactor.

The protein resides in the cytoplasm. The catalysed reaction is (6R)-5,10-methylene-5,6,7,8-tetrahydrofolate + glycine + H2O = (6S)-5,6,7,8-tetrahydrofolate + L-serine. Its pathway is one-carbon metabolism; tetrahydrofolate interconversion. It functions in the pathway amino-acid biosynthesis; glycine biosynthesis; glycine from L-serine: step 1/1. Catalyzes the reversible interconversion of serine and glycine with tetrahydrofolate (THF) serving as the one-carbon carrier. This reaction serves as the major source of one-carbon groups required for the biosynthesis of purines, thymidylate, methionine, and other important biomolecules. Also exhibits THF-independent aldolase activity toward beta-hydroxyamino acids, producing glycine and aldehydes, via a retro-aldol mechanism. The sequence is that of Serine hydroxymethyltransferase from Haemophilus influenzae (strain PittGG).